Here is a 328-residue protein sequence, read N- to C-terminus: P2Y purinoceptor 3 (328 aa).

The Extracellular portion of the chain corresponds to Met1–Val22. The N-linked (GlcNAc...) asparagine glycan is linked to Asn5. Residues Leu23–Ile43 form a helical membrane-spanning segment. The Cytoplasmic portion of the chain corresponds to Gly44–Thr57. Residues Ile58–Ile78 form a helical membrane-spanning segment. Residues Tyr79–Phe96 lie on the Extracellular side of the membrane. A disulfide bond links Cys94 and Cys172. A helical transmembrane segment spans residues Val97–Val117. Over Gln118–Thr139 the chain is Cytoplasmic. A helical transmembrane segment spans residues Trp140–Phe160. The Extracellular segment spans residues Ala161–Ile189. A helical transmembrane segment spans residues Thr190–Met210. The Cytoplasmic portion of the chain corresponds to Ala211–Lys231. A helical transmembrane segment spans residues Ala232–Leu252. The Extracellular portion of the chain corresponds to Thr253–Ala275. A helical transmembrane segment spans residues Ile276–Phe298. Residues Thr299–Cys323 lie on the Cytoplasmic side of the membrane.

This sequence belongs to the G-protein coupled receptor 1 family.

The protein localises to the cell membrane. Functionally, receptor for extracellular UDP &gt; ADP = UTP. The activity of this receptor is mediated by G proteins which activate a phosphatidylinositol-calcium second messenger system. This is P2Y purinoceptor 3 (P2RY3) from Meleagris gallopavo (Wild turkey).